A 300-amino-acid polypeptide reads, in one-letter code: Inosose dehydratase (300 aa).

Belongs to the IolE/MocC family. The cofactor is glutathione. Co(2+) is required as a cofactor. Mn(2+) serves as cofactor.

The enzyme catalyses scyllo-inosose = 3D-3,5/4-trihydroxycyclohexane-1,2-dione + H2O. Functionally, catalyzes the dehydration of inosose (2-keto-myo-inositol, 2KMI or 2,4,6/3,5-pentahydroxycyclohexanone) to 3D-(3,5/4)-trihydroxycyclohexane-1,2-dione (D-2,3-diketo-4-deoxy-epi-inositol). In Mesomycoplasma hyopneumoniae (strain J / ATCC 25934 / NCTC 10110) (Mycoplasma hyopneumoniae), this protein is Inosose dehydratase.